The sequence spans 227 residues: MDSYEPSQLIWARLLLYEISKRNGETEYQHTNGPVWWGPNDNKTVYLSITDCSGFVNALLRKSFELSQKDMVEWFDSQRPLAVDYYNTIYHQNGFTRIKNIYKLEPGDFIAIKFPNHHPSLDDTGHIMMINSYPEIMASKNLPDEYQNYNNILQFRVNVIDQTATPHGRYDTRYSPDDNQNGLGSGYIKLYTNIDGTIIGYSWSLSKKSRYIDKTVHPIVVGRLDIY.

It localises to the virion. This is an uncharacterized protein from Acanthamoeba polyphaga (Amoeba).